The primary structure comprises 108 residues: Large ribosomal subunit protein bL31B (108 aa).

Residues 88–108 (AAVEEAPAVKSKKKAPIKKKK) are disordered. A compositionally biased stretch (basic residues) spans 97-108 (KSKKKAPIKKKK).

Belongs to the bacterial ribosomal protein bL31 family. Type B subfamily. In terms of assembly, part of the 50S ribosomal subunit.

This is Large ribosomal subunit protein bL31B from Chlamydia abortus (strain DSM 27085 / S26/3) (Chlamydophila abortus).